Consider the following 377-residue polypeptide: Palmitoyltransferase ZDHHC16 (377 aa).

Over M1–R77 the chain is Cytoplasmic. The chain crosses the membrane as a helical span at residues W78–A98. Residues Y99–C116 are Lumenal-facing. Residues W117–I137 form a helical membrane-spanning segment. The Cytoplasmic portion of the chain corresponds to T138–R198. Residues S155 to F205 enclose the DHHC domain. Residue C185 is the S-palmitoyl cysteine intermediate of the active site. The chain crosses the membrane as a helical span at residues Y199–W219. At D220–S266 the chain is on the lumenal side. A helical membrane pass occupies residues L267–W287. Residues H288 to V377 lie on the Cytoplasmic side of the membrane.

Belongs to the DHHC palmitoyltransferase family. In terms of assembly, interacts with ABL1. Interacts with COPS5/JAB1. Widely expressed.

The protein localises to the endoplasmic reticulum membrane. It catalyses the reaction L-cysteinyl-[protein] + hexadecanoyl-CoA = S-hexadecanoyl-L-cysteinyl-[protein] + CoA. In terms of biological role, palmitoyl acyltransferase that mediates palmitoylation of proteins such as PLN and ZDHHC6. Required during embryonic heart development and cardiac function, possibly by mediating palmitoylation of PLN, thereby affecting PLN phosphorylation and homooligomerization. Also required for eye development. Palmitoylates ZDHHC6, affecting the quaternary assembly of ZDHHC6, its localization, stability and function. May play a role in DNA damage response. May be involved in apoptosis regulation. Involved in the proliferation of neural stem cells by regulating the FGF/ERK pathway. This is Palmitoyltransferase ZDHHC16 from Homo sapiens (Human).